The following is a 343-amino-acid chain: Methionine import ATP-binding protein MetN (343 aa).

The ABC transporter domain occupies 2-241; that stretch reads IKLSNITKVF…PKTPLAQKFI (240 aa). 38-45 lines the ATP pocket; sequence GASGAGKS.

The protein belongs to the ABC transporter superfamily. Methionine importer (TC 3.A.1.24) family. The complex is composed of two ATP-binding proteins (MetN), two transmembrane proteins (MetI) and a solute-binding protein (MetQ).

It is found in the cell inner membrane. It carries out the reaction L-methionine(out) + ATP + H2O = L-methionine(in) + ADP + phosphate + H(+). It catalyses the reaction D-methionine(out) + ATP + H2O = D-methionine(in) + ADP + phosphate + H(+). In terms of biological role, part of the ABC transporter complex MetNIQ involved in methionine import. Responsible for energy coupling to the transport system. This chain is Methionine import ATP-binding protein MetN, found in Shigella flexneri serotype 5b (strain 8401).